Consider the following 926-residue polypeptide: Nitrate reductase [NADH] (926 aa).

The disordered stretch occupies residues 1-85 (MAASVDRQYH…SDSEEDDDEN (85 aa)). The segment covering 36-46 (YTFSNPPSSNG) has biased composition (polar residues). Positions 58–73 (DNNSNSNNGSNNNNNR) are enriched in low complexity. Residue C204 participates in Mo-molybdopterin binding. The Cytochrome b5 heme-binding domain maps to 551–626 (SKMYSMSEVK…LEDFRIGELI (76 aa)). H586 and H609 together coordinate heme. One can recognise an FAD-binding FR-type domain in the interval 670 to 782 (RVKIPCKLIE…KGPLGHIEYL (113 aa)). Residues 722-725 (RAYT), 739-743 (VVKVY), F744, F751, 756-758 (VMS), and T809 each bind FAD.

The protein belongs to the nitrate reductase family. As to quaternary structure, homodimer. FAD serves as cofactor. Requires heme as cofactor. Mo-molybdopterin is required as a cofactor.

It catalyses the reaction nitrite + NAD(+) + H2O = nitrate + NADH + H(+). In terms of biological role, nitrate reductase is a key enzyme involved in the first step of nitrate assimilation in plants, fungi and bacteria. The protein is Nitrate reductase [NADH] (NIA) of Spinacia oleracea (Spinach).